Reading from the N-terminus, the 206-residue chain is Putative 3-methyladenine DNA glycosylase (206 aa).

This sequence belongs to the DNA glycosylase MPG family.

The sequence is that of Putative 3-methyladenine DNA glycosylase from Staphylococcus carnosus (strain TM300).